The following is a 126-amino-acid chain: Holo-[acyl-carrier-protein] synthase (126 aa).

Residues Asp8 and Glu56 each contribute to the Mg(2+) site.

The protein belongs to the P-Pant transferase superfamily. AcpS family. Requires Mg(2+) as cofactor.

Its subcellular location is the cytoplasm. It catalyses the reaction apo-[ACP] + CoA = holo-[ACP] + adenosine 3',5'-bisphosphate + H(+). Transfers the 4'-phosphopantetheine moiety from coenzyme A to a Ser of acyl-carrier-protein. The polypeptide is Holo-[acyl-carrier-protein] synthase (Clostridium tetani (strain Massachusetts / E88)).